The chain runs to 147 residues: Ribonuclease H (147 aa).

An RNase H type-1 domain is found at 1–142 (MAGKVVMYTD…ADELANRGVR (142 aa)). 4 residues coordinate Mg(2+): aspartate 10, glutamate 48, aspartate 70, and aspartate 134.

It belongs to the RNase H family. Monomer. It depends on Mg(2+) as a cofactor.

It localises to the cytoplasm. It catalyses the reaction Endonucleolytic cleavage to 5'-phosphomonoester.. Its function is as follows. Endonuclease that specifically degrades the RNA of RNA-DNA hybrids. The sequence is that of Ribonuclease H from Marinobacter nauticus (strain ATCC 700491 / DSM 11845 / VT8) (Marinobacter aquaeolei).